A 120-amino-acid chain; its full sequence is Chaperonin GroEL (120 aa).

ATP is bound at residue 23-27 (DGTTT).

This sequence belongs to the chaperonin (HSP60) family. In terms of assembly, forms a cylinder of 14 subunits composed of two heptameric rings stacked back-to-back. Interacts with the co-chaperonin GroES.

It localises to the cytoplasm. It carries out the reaction ATP + H2O + a folded polypeptide = ADP + phosphate + an unfolded polypeptide.. Its function is as follows. Together with its co-chaperonin GroES, plays an essential role in assisting protein folding. The GroEL-GroES system forms a nano-cage that allows encapsulation of the non-native substrate proteins and provides a physical environment optimized to promote and accelerate protein folding. This chain is Chaperonin GroEL, found in Mycobacterium xenopi.